The chain runs to 195 residues: Cysteine/O-acetylserine efflux protein (195 aa).

A run of 5 helical transmembrane segments spans residues 47 to 67, 70 to 90, 105 to 125, 142 to 162, and 177 to 194; these read SLGF…LAVI, AAVH…AWKI, ISFW…LYGV, VVGV…CWAL, and QLNI…VRIF.

It belongs to the Rht family.

The protein resides in the cell inner membrane. It catalyses the reaction O-acetyl-L-serine(in) = O-acetyl-L-serine(out). The catalysed reaction is L-cysteine(in) = L-cysteine(out). In terms of biological role, exporter of O-acetylserine (OAS) and cysteine. The polypeptide is Cysteine/O-acetylserine efflux protein (eamB) (Shigella boydii serotype 4 (strain Sb227)).